A 997-amino-acid polypeptide reads, in one-letter code: DNA polymerase I (997 aa).

The 5'-3' exonuclease domain occupies V174–S261. The 3'-5' exonuclease domain maps to V428–E589.

This sequence belongs to the DNA polymerase type-A family.

It carries out the reaction DNA(n) + a 2'-deoxyribonucleoside 5'-triphosphate = DNA(n+1) + diphosphate. Its function is as follows. In addition to polymerase activity, this DNA polymerase exhibits 3'-5' and 5'-3' exonuclease activity. The sequence is that of DNA polymerase I (polA) from Treponema pallidum (strain Nichols).